The following is a 201-amino-acid chain: Aminoglycoside N(6')-acetyltransferase type 1 (201 aa).

One can recognise an N-acetyltransferase domain in the interval 25–192; sequence VTLRLMTEHD…PAVYMVQTRQ (168 aa). The substrate site is built by Trp-51 and Asp-154. Asn-159 provides a ligand contact to acetyl-CoA.

Homodimer.

The enzyme catalyses kanamycin B + acetyl-CoA = N(6')-acetylkanamycin B + CoA + H(+). Functionally, catalyzes the transfer of an acetyl group from acetyl-CoA to the 6'-amino group of aminoglycoside molecules conferring resistance to antibiotics containing the purpurosamine ring including amikacin and kanamycin. The sequence is that of Aminoglycoside N(6')-acetyltransferase type 1 (aacA4) from Serratia marcescens.